Consider the following 81-residue polypeptide: Small ribosomal subunit protein bS16 (81 aa).

It belongs to the bacterial ribosomal protein bS16 family.

The chain is Small ribosomal subunit protein bS16 from Colwellia psychrerythraea (strain 34H / ATCC BAA-681) (Vibrio psychroerythus).